The primary structure comprises 206 residues: Large ribosomal subunit protein uL4 (206 aa).

Residues 45–76 form a disordered region; that stretch reads RQGNQSAKTRAEVSGGGKKPWRQKGTGRARQG.

This sequence belongs to the universal ribosomal protein uL4 family. As to quaternary structure, part of the 50S ribosomal subunit.

Its function is as follows. One of the primary rRNA binding proteins, this protein initially binds near the 5'-end of the 23S rRNA. It is important during the early stages of 50S assembly. It makes multiple contacts with different domains of the 23S rRNA in the assembled 50S subunit and ribosome. In terms of biological role, forms part of the polypeptide exit tunnel. In Clostridium novyi (strain NT), this protein is Large ribosomal subunit protein uL4.